A 507-amino-acid polypeptide reads, in one-letter code: ATP synthase subunit alpha, chloroplastic (507 aa).

170–177 lines the ATP pocket; it reads GDRQTGKT.

It belongs to the ATPase alpha/beta chains family. As to quaternary structure, F-type ATPases have 2 components, CF(1) - the catalytic core - and CF(0) - the membrane proton channel. CF(1) has five subunits: alpha(3), beta(3), gamma(1), delta(1), epsilon(1). CF(0) has four main subunits: a, b, b' and c.

Its subcellular location is the plastid. The protein localises to the chloroplast thylakoid membrane. It carries out the reaction ATP + H2O + 4 H(+)(in) = ADP + phosphate + 5 H(+)(out). Functionally, produces ATP from ADP in the presence of a proton gradient across the membrane. The alpha chain is a regulatory subunit. This chain is ATP synthase subunit alpha, chloroplastic, found in Cucumis sativus (Cucumber).